The following is a 135-amino-acid chain: Small ribosomal subunit protein uS8 (135 aa).

Belongs to the universal ribosomal protein uS8 family. In terms of assembly, part of the 30S ribosomal subunit. Contacts proteins S5 and S12.

One of the primary rRNA binding proteins, it binds directly to 16S rRNA central domain where it helps coordinate assembly of the platform of the 30S subunit. This chain is Small ribosomal subunit protein uS8, found in Salinispora arenicola (strain CNS-205).